The chain runs to 393 residues: MKRPVTGKDLMIVNMGPHHPSMHGVLRLIVTLDGEDVVDCEPILGYLHRGMEKIAENRAIIQYLPYVTRWDYLATMFTEAITVNGPEQLGNIQVPKRASYIRVIMLELSRIASHLLWLGPFMADIGAQTPFFYIFREREFVYDLFEAATGMRMMHNFFRIGGIAADLPYGWIDKCLDFCDYFLTEVVEYQKLITRNPIFLERVEGVGIIGGEEAINWGLSGPMLRASGIPWDLRKVDRYESYDEFEWEIQWQKQGDSLARYLVRLSEMTESIKIIQQALEGLPGGPYENLESRGFDRKRNPEWNDFEYRFISKKPSPTFELSKQELYVRVEAPKGELGIFLIGDQSGFPWRWKIRPPGFINLQILPELVKRMKLADIMTILGSIDIIMGEVDR.

The protein belongs to the complex I 49 kDa subunit family. In terms of assembly, NDH is composed of at least 16 different subunits, 5 of which are encoded in the nucleus.

It is found in the plastid. The protein localises to the chloroplast thylakoid membrane. It catalyses the reaction a plastoquinone + NADH + (n+1) H(+)(in) = a plastoquinol + NAD(+) + n H(+)(out). The catalysed reaction is a plastoquinone + NADPH + (n+1) H(+)(in) = a plastoquinol + NADP(+) + n H(+)(out). Functionally, NDH shuttles electrons from NAD(P)H:plastoquinone, via FMN and iron-sulfur (Fe-S) centers, to quinones in the photosynthetic chain and possibly in a chloroplast respiratory chain. The immediate electron acceptor for the enzyme in this species is believed to be plastoquinone. Couples the redox reaction to proton translocation, and thus conserves the redox energy in a proton gradient. The protein is NAD(P)H-quinone oxidoreductase subunit H, chloroplastic of Nasturtium officinale (Watercress).